Here is a 489-residue protein sequence, read N- to C-terminus: Betaine aldehyde dehydrogenase (489 aa).

Positions 26 and 93 each coordinate K(+). Residue 150–152 (GAW) participates in NAD(+) binding. Lys162 (charge relay system) is an active-site residue. Position 176 to 179 (176 to 179 (KPSE)) interacts with NAD(+). A K(+)-binding site is contributed by Val180. NAD(+) is bound at residue 229–232 (GVET). K(+) is bound at residue Leu245. The active-site Proton acceptor is Glu251. The NAD(+) site is built by Gly253, Cys285, and Glu386. The active-site Nucleophile is Cys285. Cys285 carries the post-translational modification Cysteine sulfenic acid (-SOH). The K(+) site is built by Lys456 and Gly459. Residue Glu463 is the Charge relay system of the active site.

The protein belongs to the aldehyde dehydrogenase family. As to quaternary structure, dimer of dimers. K(+) serves as cofactor.

It carries out the reaction betaine aldehyde + NAD(+) + H2O = glycine betaine + NADH + 2 H(+). It participates in amine and polyamine biosynthesis; betaine biosynthesis via choline pathway; betaine from betaine aldehyde: step 1/1. Involved in the biosynthesis of the osmoprotectant glycine betaine. Catalyzes the irreversible oxidation of betaine aldehyde to the corresponding acid. This is Betaine aldehyde dehydrogenase from Burkholderia orbicola (strain MC0-3).